The following is a 353-amino-acid chain: Survival factor 2 (353 aa).

It belongs to the SVF1 family.

It is found in the cytoplasm. The protein localises to the nucleus. The polypeptide is Survival factor 2 (svf2) (Schizosaccharomyces pombe (strain 972 / ATCC 24843) (Fission yeast)).